Here is a 197-residue protein sequence, read N- to C-terminus: Imidazoleglycerol-phosphate dehydratase (197 aa).

This sequence belongs to the imidazoleglycerol-phosphate dehydratase family.

The protein localises to the cytoplasm. It carries out the reaction D-erythro-1-(imidazol-4-yl)glycerol 3-phosphate = 3-(imidazol-4-yl)-2-oxopropyl phosphate + H2O. The protein operates within amino-acid biosynthesis; L-histidine biosynthesis; L-histidine from 5-phospho-alpha-D-ribose 1-diphosphate: step 6/9. In Rhodopseudomonas palustris (strain ATCC BAA-98 / CGA009), this protein is Imidazoleglycerol-phosphate dehydratase.